A 512-amino-acid polypeptide reads, in one-letter code: tRNA-2-methylthio-N(6)-dimethylallyladenosine synthase (512 aa).

The interval M1 to P20 is disordered. Residues R21 to H137 enclose the MTTase N-terminal domain. [4Fe-4S] cluster is bound by residues C30, C66, C100, C174, C178, and C181. The Radical SAM core domain occupies R160 to E397. Residues R399–P469 form the TRAM domain. Basic and acidic residues predominate over residues A470–T486. The disordered stretch occupies residues A470–L512.

This sequence belongs to the methylthiotransferase family. MiaB subfamily. As to quaternary structure, monomer. [4Fe-4S] cluster serves as cofactor.

It is found in the cytoplasm. It catalyses the reaction N(6)-dimethylallyladenosine(37) in tRNA + (sulfur carrier)-SH + AH2 + 2 S-adenosyl-L-methionine = 2-methylsulfanyl-N(6)-dimethylallyladenosine(37) in tRNA + (sulfur carrier)-H + 5'-deoxyadenosine + L-methionine + A + S-adenosyl-L-homocysteine + 2 H(+). Catalyzes the methylthiolation of N6-(dimethylallyl)adenosine (i(6)A), leading to the formation of 2-methylthio-N6-(dimethylallyl)adenosine (ms(2)i(6)A) at position 37 in tRNAs that read codons beginning with uridine. This is tRNA-2-methylthio-N(6)-dimethylallyladenosine synthase from Mycolicibacterium gilvum (strain PYR-GCK) (Mycobacterium gilvum (strain PYR-GCK)).